Reading from the N-terminus, the 440-residue chain is Ribosomal protein uS12 methylthiotransferase RimO (440 aa).

The MTTase N-terminal domain occupies 5–116 (PTIAISHLGC…IVNVIERAEQ (112 aa)). [4Fe-4S] cluster is bound by residues cysteine 14, cysteine 50, cysteine 79, cysteine 154, cysteine 158, and cysteine 161. In terms of domain architecture, Radical SAM core spans 140–370 (TTTEGVAYLR…ALQQPISWRK (231 aa)). Positions 372–438 (QQEVGKTVEV…EYDLFGQVVS (67 aa)) constitute a TRAM domain.

The protein belongs to the methylthiotransferase family. RimO subfamily. The cofactor is [4Fe-4S] cluster.

It is found in the cytoplasm. It carries out the reaction L-aspartate(89)-[ribosomal protein uS12]-hydrogen + (sulfur carrier)-SH + AH2 + 2 S-adenosyl-L-methionine = 3-methylsulfanyl-L-aspartate(89)-[ribosomal protein uS12]-hydrogen + (sulfur carrier)-H + 5'-deoxyadenosine + L-methionine + A + S-adenosyl-L-homocysteine + 2 H(+). Functionally, catalyzes the methylthiolation of an aspartic acid residue of ribosomal protein uS12. In Trichormus variabilis (strain ATCC 29413 / PCC 7937) (Anabaena variabilis), this protein is Ribosomal protein uS12 methylthiotransferase RimO.